Reading from the N-terminus, the 830-residue chain is Outer dense fiber protein 2 (830 aa).

Phosphoserine occurs at positions 73 and 74. Thr92 is subject to Phosphothreonine. At Ser95 the chain carries Phosphoserine; by TSSK4. A phosphoserine mark is found at Ser106 and Ser109. Phosphothreonine is present on Thr110. Phosphoserine occurs at positions 115 and 129. Residue Lys138 forms a Glycyl lysine isopeptide (Lys-Gly) (interchain with G-Cter in SUMO2) linkage. Ser139 is subject to Phosphoserine. Positions Gln144–Asp217 form a coiled coil. Thr231 carries the post-translational modification Phosphothreonine. Coiled-coil stretches lie at residues Asp245–Leu423 and Glu461–Gln798. 2 positions are modified to phosphoserine: Ser261 and Ser632. The interaction with BBOF1 stretch occupies residues Lys537–Leu701.

It belongs to the ODF2 family. In terms of assembly, self-associates. Associates with microtubules and forms a fibrillar structure partially linked to the microtubule network. Interacts via its C-terminus with PLK1. Interacts with ODF1. Interacts with MARK4; the interaction is required for localization of ODF2 to centrioles. Interacts with TSSK4. Interacts with AKNA. Interacts with CFAP58. Interacts with BBOF1. Interacts with CCDC38. Interacts with CCDC42. Post-translationally, tyrosine phosphorylated. Phosphorylated on Ser-95 by TSSK4. Testis-specific (at protein level). Expressed in spermatids at tubular stage V of the spermatogenic cycle. Highly expressed in the cytoplasm of elongating spermatids (tubular stages X/XI). In step 14/15 spermatids of tubular stage III/IV low expression detected. No expression detected in other testicular cells as well as the early round of spermatids.

The protein resides in the cytoplasm. Its subcellular location is the cytoskeleton. The protein localises to the microtubule organizing center. It localises to the centrosome. It is found in the cell projection. The protein resides in the cilium. Its subcellular location is the centriole. The protein localises to the spindle pole. It localises to the flagellum. Functionally, seems to be a major component of sperm tail outer dense fibers (ODF). ODFs are filamentous structures located on the outside of the axoneme in the midpiece and principal piece of the mammalian sperm tail and may help to maintain the passive elastic structures and elastic recoil of the sperm tail. May have a modulating influence on sperm motility. Functions as a general scaffold protein that is specifically localized at the distal/subdistal appendages of mother centrioles. Component of the centrosome matrix required for the localization of PLK1 and NIN to the centrosomes. Required for the formation and/or maintenance of normal CETN1 assembly. This chain is Outer dense fiber protein 2 (Odf2), found in Mus musculus (Mouse).